A 304-amino-acid chain; its full sequence is MITVFSGGTGTPKLIRGLRQILHDHEITVVVNTAEDLWMSGLYVSPDIDTVQYLFSGLLNTDSWWGIRGDSFETFHAMEKLGYTELLPLGDKDRATNIARAEFLRQGMTLTEATEKIAKGYGVSARILPMSDQNVASYVVCEDDSLMHYQEYWVGKRGNVNIKGVVRKTTDGLPLKTTPEVISAIEESDGVIIGPSNPVTSIGPILECAGVREALQNTFTAAVSPFIGNRPVSGPAAALMKAWGYESTSYGTWQVYKDVVDLFIQDVRDTAIEVPGAHRLDTMMTNEKKAESLAWDLLSYFPRK.

Position 49 (D49) interacts with 7,8-didemethyl-8-hydroxy-5-deazariboflavin.

The protein belongs to the CofD family. In terms of assembly, homodimer. The cofactor is Mg(2+).

It carries out the reaction (2S)-lactyl-2-diphospho-5'-guanosine + 7,8-didemethyl-8-hydroxy-5-deazariboflavin = oxidized coenzyme F420-0 + GMP + H(+). It participates in cofactor biosynthesis; coenzyme F420 biosynthesis. In terms of biological role, catalyzes the transfer of the 2-phospholactate moiety from (2S)-lactyl-2-diphospho-5'-guanosine to 7,8-didemethyl-8-hydroxy-5-deazariboflavin (FO) with the formation of oxidized coenzyme F420-0 and GMP. The chain is 2-phospho-L-lactate transferase from Methanocorpusculum labreanum (strain ATCC 43576 / DSM 4855 / Z).